The primary structure comprises 412 residues: MGQDQTKQQIEKGLQLYQANETGKALEIWQQVVERSTELPGRFRALGCLITAHSEMGKYEDMLRFAVAQSEAARQMGDPERVTEAYLNLARGHEKLCEFSEAVAYCRTCLGAEGGPLRLQFNGQVCLSMGNAFLGLSAFQKALECFEKALRYAHGNDDKMLECRVCCSLGAFYVQLKDYEKALFFPCKSAELVADYGRGWSLKYKAMSRYHMAAAYRKLGRMDDAMECCEESMKIALQHQDRPLQALCLLCFADIHRHRSDIGKALPRYESSLNIMTEIGNRLGQAHVLLNIAKCWMTEKKLDKTLGVVQKAEELADAVGNKLVLLKAHCLYETIYREMGSDQLLRDHVVKFHECMEDMELYCGLCGESIGDQNSQLQALPCSHLFHLKCLQTNGNRGCPNCKRSSVKPGYV.

Gly2 carries N-myristoyl glycine lipidation. TPR repeat units follow at residues 6-39, 83-116, 123-156, 163-196, 206-239, 246-279, and 286-319; these read TKQQ…STEL, TEAY…EGGP, GQVC…AHGN, CRVC…VADY, AMSR…ALQH, ALCL…MTEI, and AHVL…ADAV. Tyr196 carries the phosphotyrosine modification. An RING-type zinc finger spans residues 363 to 403; that stretch reads CGLCGESIGDQNSQLQALPCSHLFHLKCLQTNGNRGCPNCK. Ser405 is modified (phosphoserine).

It belongs to the RAPsyn family.

The protein localises to the cell membrane. It is found in the postsynaptic cell membrane. The protein resides in the cytoplasm. Its subcellular location is the cytoskeleton. Functionally, postsynaptic protein required for clustering of nicotinic acetylcholine receptors (nAChRs) at the neuromuscular junction. It may link the receptor to the underlying postsynaptic cytoskeleton, possibly by direct association with actin or spectrin. The chain is 43 kDa receptor-associated protein of the synapse (RAPSN) from Tetronarce californica (Pacific electric ray).